Reading from the N-terminus, the 289-residue chain is Serine/threonine-protein phosphatase Pgam5, mitochondrial (289 aa).

The chain crosses the membrane as a helical span at residues 7–23 (FACGTGAGLLTFYLTKL).

The protein belongs to the phosphoglycerate mutase family. BPG-dependent PGAM subfamily. As to quaternary structure, interacts with Pk92B/ASK1.

Its subcellular location is the mitochondrion outer membrane. It catalyses the reaction O-phospho-L-seryl-[protein] + H2O = L-seryl-[protein] + phosphate. The enzyme catalyses O-phospho-L-threonyl-[protein] + H2O = L-threonyl-[protein] + phosphate. Its function is as follows. Displays phosphatase activity for serine/threonine residues, and dephosphorylates and activates Pk92B kinase. Has apparently no phosphoglycerate mutase activity. This is Serine/threonine-protein phosphatase Pgam5, mitochondrial from Drosophila persimilis (Fruit fly).